The sequence spans 319 residues: Ferrochelatase (319 aa).

Fe cation-binding residues include H192 and E271.

The protein belongs to the ferrochelatase family.

The protein resides in the cytoplasm. It catalyses the reaction heme b + 2 H(+) = protoporphyrin IX + Fe(2+). It participates in porphyrin-containing compound metabolism; protoheme biosynthesis; protoheme from protoporphyrin-IX: step 1/1. Its function is as follows. Catalyzes the ferrous insertion into protoporphyrin IX. The sequence is that of Ferrochelatase from Geotalea uraniireducens (strain Rf4) (Geobacter uraniireducens).